A 61-amino-acid chain; its full sequence is Sperm protamine P1 (61 aa).

The tract at residues 1 to 61 (MARYRHSRSR…RRYSRRRRRY (61 aa)) is disordered.

The protein belongs to the protamine P1 family. In terms of tissue distribution, testis.

The protein localises to the nucleus. The protein resides in the chromosome. Protamines substitute for histones in the chromatin of sperm during the haploid phase of spermatogenesis. They compact sperm DNA into a highly condensed, stable and inactive complex. The chain is Sperm protamine P1 (PRM1) from Potorous longipes (Long-footed potoroo).